The sequence spans 589 residues: Aspartate--tRNA(Asp/Asn) ligase (589 aa).

Glu-170 serves as a coordination point for L-aspartate. Positions 194 to 197 (QLFK) are aspartate. Arg-216 provides a ligand contact to L-aspartate. ATP is bound by residues 216–218 (RDE) and Gln-225. His-448 contributes to the L-aspartate binding site. Glu-482 contributes to the ATP binding site. Position 489 (Arg-489) interacts with L-aspartate. Position 534–537 (534–537 (GWDR)) interacts with ATP. A disordered region spans residues 563 to 589 (PLTDAPASITAQQRKESGIDTKPKEVE). Over residues 575–589 (QRKESGIDTKPKEVE) the composition is skewed to basic and acidic residues.

Belongs to the class-II aminoacyl-tRNA synthetase family. Type 1 subfamily. In terms of assembly, homodimer.

The protein resides in the cytoplasm. It catalyses the reaction tRNA(Asx) + L-aspartate + ATP = L-aspartyl-tRNA(Asx) + AMP + diphosphate. Its function is as follows. Aspartyl-tRNA synthetase with relaxed tRNA specificity since it is able to aspartylate not only its cognate tRNA(Asp) but also tRNA(Asn). Reaction proceeds in two steps: L-aspartate is first activated by ATP to form Asp-AMP and then transferred to the acceptor end of tRNA(Asp/Asn). The protein is Aspartate--tRNA(Asp/Asn) ligase of Mycobacterium leprae (strain Br4923).